The following is a 226-amino-acid chain: Ribonuclease 3 (226 aa).

In terms of domain architecture, RNase III spans 7 to 129 (LPRLCRTLGY…IIGAIYLDSD (123 aa)). Glutamate 42 contacts Mg(2+). Aspartate 46 is an active-site residue. Mg(2+) contacts are provided by aspartate 115 and glutamate 118. Glutamate 118 is a catalytic residue. The DRBM domain maps to 156–226 (DAKTLLQEYL…AAQVLELLKK (71 aa)).

It belongs to the ribonuclease III family. Homodimer. Mg(2+) is required as a cofactor.

Its subcellular location is the cytoplasm. It catalyses the reaction Endonucleolytic cleavage to 5'-phosphomonoester.. Its function is as follows. Digests double-stranded RNA. Involved in the processing of primary rRNA transcript to yield the immediate precursors to the large and small rRNAs (23S and 16S). Processes some mRNAs, and tRNAs when they are encoded in the rRNA operon. Processes pre-crRNA and tracrRNA of type II CRISPR loci if present in the organism. The chain is Ribonuclease 3 from Shewanella sp. (strain ANA-3).